Consider the following 1254-residue polypeptide: Structural polyprotein (1254 aa).

The interval 1-33 (MFPFQPMYPMQPMPYRNPFAAPRRPWFPRTDPF) is necessary for nucleocapsid assembly and virus assembly. The interval 33–68 (FLAMQVQELTRSMANLTFKQRRDAPPEGPSAKKPKK) is host transcription inhibition. The short motif at 41–48 (LTRSMANL) is the Supraphysiological nuclear export signal element. The disordered stretch occupies residues 45–119 (MANLTFKQRR…KKPGKRQRMV (75 aa)). Positions 64–68 (KKPKK) match the Nuclear localization signal motif. The segment covering 80-92 (GKKKKNQGKKKAK) has biased composition (basic residues). A binding to the viral RNA region spans residues 91–127 (AKTGPPNPKAQNGNKKKTNKKPGKRQRMVMKLESDKT). Residues Thr-93 and Thr-108 each carry the phosphothreonine modification. Over residues 104–118 (NKKKTNKKPGKRQRM) the composition is skewed to basic residues. The tract at residues 112–126 (PGKRQRMVMKLESDK) is ribosome-binding. At Ser-124 the chain carries Phosphoserine. Residues 126 to 275 (KTFPIMLEGK…KYTPENCEQW (150 aa)) enclose the Peptidase S3 domain. Thr-127 carries the post-translational modification Phosphothreonine. Catalysis depends on charge relay system residues His-152, Asp-174, and Ser-226. Positions 276-287 (SLVTTMCLLANV) are functions as an uncleaved signal peptide for the precursor of protein E3/E2. Over 276-701 (SLVTTMCLLA…HYYHRYPMST (426 aa)) the chain is Extracellular. N-linked (GlcNAc...) asparagine; by host glycans are attached at residues Asn-286, Asn-546, and Asn-652. The helical transmembrane segment at 702–722 (ILGLSICAAIATVSVAASTWL) threads the bilayer. The Cytoplasmic segment spans residues 723 to 757 (FCRSRVACLTPYRLTPNARIPFCLAVLCCARTARA). S-palmitoyl cysteine; by host attachment occurs at residues Cys-730, Cys-750, and Cys-751. Topologically, residues 758–772 (ETTWESLDHLWNNNQ) are extracellular. Residues 773–793 (QMFWIQLLIPLAALIVVTRLL) form a helical membrane-spanning segment. Over 794 to 795 (RC) the chain is Cytoplasmic. Residues 796-816 (VCCVVPFLVMAGAAAPAYEHA) traverse the membrane as a helical segment. Residues 817–1224 (TTMPSQAGIS…SKTAWTWLTS (408 aa)) are Extracellular-facing. Cystine bridges form between Cys-861/Cys-926, Cys-874/Cys-906, Cys-875/Cys-908, and Cys-880/Cys-890. Residues 896–913 (VYPFMWGGAYCFCDTENT) form an E1 fusion peptide loop region. Asn-946 is a glycosylation site (N-linked (GlcNAc...) asparagine; by host). 4 cysteine pairs are disulfide-bonded: Cys-1071–Cys-1083, Cys-1113–Cys-1188, Cys-1118–Cys-1192, and Cys-1140–Cys-1182. A helical membrane pass occupies residues 1225–1245 (LLGGSAVIIIIGLVLATIVAM). At 1246 to 1254 (YVLTNQKHN) the chain is on the cytoplasmic side.

In terms of assembly, homodimer. Homomultimer. Interacts with host karyopherin KPNA4; this interaction allows the nuclear import of the viral capsid protein. Interacts with spike glycoprotein E2. Interacts with host IRAK1; the interaction leads to inhibition of IRAK1-dependent signaling. Part of a tetrameric complex composed of host CRM1, host importin alpha/beta dimer and the viral capsid; this complex blocks the receptor-mediated transport through the nuclear pore. Interacts with host phosphatase PPP1CA; this interaction dephosphorylates the capsid protein, which increases its ability to bind to the viral genome. The precursor of protein E3/E2 and E1 form a heterodimer shortly after synthesis. As to quaternary structure, interacts with spike glycoprotein E2. The precursor of protein E3/E2 and E1 form a heterodimer shortly after synthesis. Processing of the precursor of protein E3/E2 into E2 and E3 results in a heterodimer of the spike glycoproteins E2 and E1. Spike at virion surface are constituted of three E2-E1 heterodimers. After target cell attachment and endocytosis, E1 change conformation to form homotrimers. Interacts with 6K protein. Interacts (via fusion peptide loop) with host LDLRAD3 (via domain LDL-receptor class A 1); this interaction mediates viral entry to the host cell. 2 adjacent E2-E1 heterodimers in the trimeric spike interact with host LDLRAD3. In terms of assembly, interacts with spike glycoprotein E1. Processing of the precursor of protein E3/E2 into E2 and E3 results in a heterodimer of the spike glycoproteins E2 and E1. Spike at virion surface are constituted of a trimer of E2-E1 heterodimers. Interacts with 6K protein. Interacts with host LDLRAD3 (via domain LDL-receptor class A 1); this interaction mediates viral entry to the host cell. 2 adjacent E2-E1 heterodimers in the trimeric spike interact with host LDLRAD3. Oligomer. Interacts with spike glycoprotein E1. Interacts with spike glycoprotein E2. In terms of processing, structural polyprotein: Specific enzymatic cleavages in vivo yield mature proteins. Capsid protein is auto-cleaved during polyprotein translation, unmasking a signal peptide at the N-terminus of the precursor of E3/E2. The remaining polyprotein is then targeted to the host endoplasmic reticulum, where host signal peptidase cleaves it into pE2, 6K and E1 proteins. pE2 is further processed to mature E3 and E2 by host furin in trans-Golgi vesicle. Phosphorylated on serine and threonine residues. Post-translationally, palmitoylated via thioester bonds. These palmitoylations may induce disruption of the C-terminus transmembrane. This would result in the reorientation of E2 C-terminus from lumenal to cytoplasmic side. In terms of processing, N-glycosylated. Palmitoylated via thioester bonds.

The protein resides in the virion. The protein localises to the host cytoplasm. Its subcellular location is the host cell membrane. It is found in the host nucleus. It localises to the virion membrane. It carries out the reaction Autocatalytic release of the core protein from the N-terminus of the togavirus structural polyprotein by hydrolysis of a -Trp-|-Ser- bond.. Forms an icosahedral capsid with a T=4 symmetry composed of 240 copies of the capsid protein surrounded by a lipid membrane through which penetrate 80 spikes composed of trimers of E1-E2 heterodimers. The capsid protein binds to the viral RNA genome at a site adjacent to a ribosome binding site for viral genome translation following genome release. Possesses a protease activity that results in its autocatalytic cleavage from the nascent structural protein. Following its self-cleavage, the capsid protein transiently associates with ribosomes, and within several minutes the protein binds to viral RNA and rapidly assembles into icosahedric core particles. The resulting nucleocapsid eventually associates with the cytoplasmic domain of the spike glycoprotein E2 at the cell membrane, leading to budding and formation of mature virions. In case of infection, new virions attach to target cells and after clathrin-mediated endocytosis their membrane fuses with the host endosomal membrane. This leads to the release of the nucleocapsid into the cytoplasm, followed by an uncoating event necessary for the genomic RNA to become accessible. The uncoating might be triggered by the interaction of capsid proteins with ribosomes. Binding of ribosomes would release the genomic RNA since the same region is genomic RNA-binding and ribosome-binding. Specifically inhibits interleukin-1 receptor-associated kinase 1/IRAK1-dependent signaling during viral entry, representing a means by which the alphaviruses may evade innate immune detection and activation prior to viral gene expression. Inhibits host transcription. Forms a tetrameric complex with XPO1/CRM1 and the nuclear import receptor importin. This complex blocks the central channel of host nuclear pores thereby inhibiting the receptor-mediated nuclear transport and thus the host mRNA and rRNA transcription. The inhibition of transcription is linked to a cytopathic effect on the host cell. In terms of biological role, provides the signal sequence for the translocation of the precursor of protein E3/E2 to the host endoplasmic reticulum. Furin-cleaved E3 remains associated with spike glycoprotein E1 and mediates pH protection of the latter during the transport via the secretory pathway. After virion release from the host cell, the assembly protein E3 is gradually released in the extracellular space. Functionally, plays a role in viral attachment to target host cell, by binding to the cell receptor LDLRAD3. Synthesized as a p62 precursor which is processed by furin at the cell membrane just before virion budding, giving rise to E2-E1 heterodimer. The p62-E1 heterodimer is stable, whereas E2-E1 is unstable and dissociate at low pH. p62 is processed at the last step, presumably to avoid E1 fusion activation before its final export to cell surface. E2 C-terminus contains a transitory transmembrane that would be disrupted by palmitoylation, resulting in reorientation of the C-terminal tail from lumenal to cytoplasmic side. This step is critical since E2 C-terminus is involved in budding by interacting with capsid proteins. This release of E2 C-terminus in cytoplasm occurs lately in protein export, and precludes premature assembly of particles at the endoplasmic reticulum membrane. Its function is as follows. Acts as a viroporin that participates in virus glycoprotein processing and transport to the plasma membrane, cell permeabilization and budding of viral particles. Disrupts the calcium homeostasis of the cell, probably at the endoplasmic reticulum level. This leads to cytoplasmic calcium elevation. Because of its lipophilic properties, the 6K protein is postulated to influence the selection of lipids that interact with the transmembrane domains of the glycoproteins, which, in turn, affects the deformability of the bilayer required for the extreme curvature that occurs as budding proceeds. Present in low amount in virions, about 3% compared to viral glycoproteins. Class II viral fusion protein. Fusion activity is inactive as long as E1 is bound to E2 in mature virion. After virus attachment to cell receptor LDLRAD3 and endocytosis, acidification of the endosome induce dissociation of E1/E2 heterodimer and concomitant trimerization of the E1 subunits. This E1 trimer is fusion active, and promotes release of viral nucleocapsid in cytoplasm after endosome and viral membrane fusion. Efficient fusion requires the presence of cholesterol and sphingolipid in the target membrane. The protein is Structural polyprotein of Bos taurus (Bovine).